Consider the following 405-residue polypeptide: Phosphoglycerate kinase (405 aa).

Substrate contacts are provided by residues 24–26 (DFN), Arg40, 63–66 (HLGR), Arg122, and Arg162. ATP-binding positions include Lys212, Glu331, and 361–364 (GGDS).

The protein belongs to the phosphoglycerate kinase family. Monomer.

It localises to the cytoplasm. The enzyme catalyses (2R)-3-phosphoglycerate + ATP = (2R)-3-phospho-glyceroyl phosphate + ADP. It functions in the pathway carbohydrate degradation; glycolysis; pyruvate from D-glyceraldehyde 3-phosphate: step 2/5. This Corynebacterium glutamicum (strain R) protein is Phosphoglycerate kinase.